We begin with the raw amino-acid sequence, 2752 residues long: Serine/arginine repetitive matrix protein 2 (2752 aa).

Met1 bears the N-acetylmethionine mark. The stretch at 60–92 (HERKRRVELRCLELEEMMEEQGYEEQQIQEKVA) forms a coiled coil. An N6-acetyllysine modification is found at Lys101. Glycyl lysine isopeptide (Lys-Gly) (interchain with G-Cter in SUMO2) cross-links involve residues Lys108 and Lys130. Residues 141–2131 (ISDSYVDGSS…MSPTPLDRCR (1991 aa)) are disordered. Tyr145 is modified (phosphotyrosine). Lys169 bears the N6-acetyllysine mark. Residues 175–185 (RESSSSRSPTP) show a composition bias toward low complexity. 2 stretches are compositionally biased toward basic residues: residues 186–197 (KQKKKKKKKDRG) and 207–249 (RERK…KRSR). A sufficient for RNA-binding region spans residues 197 to 259 (GRRSESSSPR…STTPAPKSRR (63 aa)). Ser220 and Ser222 each carry phosphoserine. Positions 263-290 (STSADSASSSDTSRSRSRSAAAKTHTTA) are enriched in low complexity. Thr286 bears the Phosphothreonine mark. Residues Ser295, Ser297, Ser300, Ser322, and Ser323 each carry the phosphoserine modification. Positions 313 to 333 (PGTTSTQRPSSPETATKQPSS) are enriched in polar residues. The segment covering 335–347 (YEDKDKDKKEKSA) has biased composition (basic and acidic residues). Over residues 348-360 (TRPSPSPERSSTG) the composition is skewed to low complexity. A phosphoserine mark is found at Ser351, Ser353, Ser357, and Ser358. Phosphothreonine is present on residues Thr359 and Thr367. Ser377 is modified (phosphoserine). The segment covering 380-398 (PLATTPLSQEPVNPPSEAS) has biased composition (polar residues). Thr383 and Thr384 each carry phosphothreonine. Residues Ser387, Ser395, Ser398, Ser404, and Ser408 each carry the phosphoserine modification. The segment covering 399–410 (PTRDRSPPKSPE) has biased composition (basic and acidic residues). Residues 411 to 421 (KLPQSSSSESS) are compositionally biased toward low complexity. Phosphoserine is present on residues Ser424, Ser435, Ser436, Ser437, Ser440, and Ser454. Over residues 461–483 (NRSHGRAKRDKSHSHTPSRRMGR) the composition is skewed to basic residues. Phosphoserine occurs at positions 484, 486, 506, 508, 510, 534, 536, and 543. A compositionally biased stretch (basic residues) spans 491 to 536 (KRGRSRSRTPTKRGHSRSRSPQWRRSRSAQRWGRSRSPQRRGRSRS). Residues 537–546 (PQRPGWSRSR) show a composition bias toward low complexity. Composition is skewed to basic residues over residues 547-564 (NTQR…RSHS), 571-723 (GRSR…RRGR), and 732-742 (NKSRTSQRRSR). Phosphoserine occurs at positions 702, 704, and 706. Phosphoserine occurs at positions 778, 780, and 783. Residues 790–805 (SQTPPRRSRSGSSQPK) are compositionally biased toward low complexity. Residues 806 to 816 (AKSRTPPRRSR) show a composition bias toward basic residues. Over residues 828 to 841 (KTPSRQSHSSSSPH) the composition is skewed to low complexity. Residues Ser846 and Ser854 each carry the phosphoserine modification. Over residues 849 to 869 (PPRQGSITSPQANEQSVTPQR) the composition is skewed to polar residues. A Phosphothreonine modification is found at Thr856. 2 positions are modified to phosphoserine: Ser857 and Ser864. Position 866 is a phosphothreonine (Thr866). Residues Ser871, Ser875, Ser876, Ser908, Ser935, Ser950, Ser952, Ser954, Ser957, Ser968, Ser970, Ser972, Ser973, and Ser974 each carry the phosphoserine modification. Low complexity-rich tracts occupy residues 901–917 (SSTP…SPQP) and 924–945 (SPRQ…TSRT). Residues Thr977 and Thr983 each carry the phosphothreonine modification. A phosphoserine mark is found at Ser992 and Ser994. The residue at position 996 (Tyr996) is a Phosphotyrosine. Thr1003 carries the post-translational modification Phosphothreonine. The segment covering 1008 to 1017 (SLSGSKSPCP) has biased composition (low complexity). Residues Ser1010, Ser1014, Ser1024, Ser1028, Ser1032, and Ser1042 each carry the phosphoserine modification. The span at 1040–1064 (KSSTPPGESYFGVSSLQLKGQSQTS) shows a compositional bias: polar residues. Thr1043 carries the post-translational modification Phosphothreonine. Tyr1049 carries the phosphotyrosine modification. Phosphoserine is present on residues Ser1064, Ser1069, Ser1072, Ser1073, Ser1083, Ser1099, Ser1101, Ser1102, and Ser1103. Polar residues predominate over residues 1071–1092 (TSSPEVRQSHSESPSLQSKSQT). Residues 1093–1104 (SPKGGRSRSSSP) are compositionally biased toward low complexity. At Thr1106 the chain carries Phosphothreonine. Ser1112, Ser1122, Ser1124, Ser1129, Ser1132, Ser1152, Ser1179, Ser1188, and Ser1198 each carry phosphoserine. Residues 1132 to 1159 (SPEQSRFQSDSSSYPTVDSNSLLGQSRL) are compositionally biased toward polar residues. The span at 1204-1214 (DTLRTPPRERS) shows a compositional bias: basic and acidic residues. Thr1208 bears the Phosphothreonine mark. 9 positions are modified to phosphoserine: Ser1214, Ser1219, Ser1227, Ser1254, Ser1257, Ser1258, Ser1266, Ser1270, and Ser1271. A compositionally biased stretch (polar residues) spans 1216 to 1233 (AGSSPETKEQNSALPTSS). Positions 1283–1292 (TLDQSQSQAS) are enriched in polar residues. Ser1311, Ser1318, Ser1320, Ser1326, Ser1329, Ser1336, Ser1348, Ser1368, Ser1382, Ser1383, Ser1384, Ser1387, Ser1401, Ser1403, and Ser1404 each carry phosphoserine. The span at 1318–1328 (SNSPLRENSFG) shows a compositional bias: polar residues. Positions 1376–1386 (TRSSGHSSSEL) are enriched in polar residues. Thr1413 carries the phosphothreonine modification. Phosphoserine occurs at positions 1415, 1421, 1423, and 1424. A Phosphothreonine modification is found at Thr1434. Over residues 1441–1452 (SGSSPGLRDGSG) the composition is skewed to low complexity. A phosphoserine mark is found at Ser1444 and Ser1451. A Phosphothreonine modification is found at Thr1453. The segment covering 1453–1463 (TPSRHSLSGSS) has biased composition (polar residues). 4 positions are modified to phosphoserine: Ser1458, Ser1460, Ser1462, and Ser1463. Thr1472 carries the post-translational modification Phosphothreonine. A phosphoserine mark is found at Ser1482 and Ser1483. Thr1492 carries the post-translational modification Phosphothreonine. A phosphoserine mark is found at Ser1497, Ser1499, Ser1501, and Ser1502. At Thr1511 the chain carries Phosphothreonine. Phosphoserine is present on residues Ser1517, Ser1519, Ser1521, and Ser1522. The residue at position 1531 (Thr1531) is a Phosphothreonine. Residues 1534 to 1544 (GQRSRSGSSQE) are compositionally biased toward polar residues. Ser1537, Ser1539, Ser1541, Ser1542, and Ser1552 each carry phosphoserine. Residues 1555-1567 (ERSESDSSPDSKA) are compositionally biased toward basic and acidic residues. Residues 1568–1577 (KTRTPLRQRS) are compositionally biased toward basic residues. Phosphoserine occurs at positions 1577, 1579, 1581, 1582, 1598, 1600, 1601, 1616, 1620, 1621, 1648, 1658, 1691, 1693, and 1694. Over residues 1638 to 1657 (SGSSSKGRGPSPEGSSSTES) the composition is skewed to low complexity. Residues 1681-1691 (KSRTPPRRRSS) are compositionally biased toward basic residues. Thr1698 bears the Phosphothreonine mark. Residues Ser1727, Ser1729, Ser1731, Ser1732, Ser1762, and Ser1764 each carry the phosphoserine modification. Composition is skewed to basic residues over residues 1769–1789 (GLQR…RRRD) and 1798–1816 (SRRR…RRRG). Phosphoserine occurs at positions 1818, 1822, 1854, 1857, 1876, and 1878. Over residues 1834 to 1854 (SSRRRRGRSRTPPTSRKRSRS) the composition is skewed to basic residues. The span at 1862–2068 (KRSRSRASPA…PRTARGKRSL (207 aa)) shows a compositional bias: basic residues. Thr1880 carries the phosphothreonine modification. 2 positions are modified to phosphoserine: Ser1884 and Ser1890. The residue at position 1892 (Thr1892) is a Phosphothreonine. Phosphoserine is present on residues Ser1893, Ser1916, Ser1919, Ser1923, and Ser1925. Phosphothreonine occurs at positions 1927 and 1931. Phosphoserine occurs at positions 1946 and 1948. 2 positions are modified to phosphothreonine: Thr1950 and Thr1954. A phosphoserine mark is found at Ser1958 and Ser1960. Thr1962 and Thr1966 each carry phosphothreonine. Phosphoserine occurs at positions 1970, 1972, and 1975. At Thr1978 the chain carries Phosphothreonine. A phosphoserine mark is found at Ser1984, Ser1987, Ser1996, Ser1999, Ser2008, Ser2011, Ser2018, and Ser2020. The residue at position 2022 (Thr2022) is a Phosphothreonine. Residues Ser2030 and Ser2032 each carry the phosphoserine modification. Thr2034 carries the phosphothreonine modification. Residues Ser2042, Ser2044, Ser2046, and Ser2067 each carry the phosphoserine modification. Thr2069 carries the post-translational modification Phosphothreonine. Residues 2070–2095 (RSPPAIRRRSASGSSSDRSRSATPPA) are compositionally biased toward low complexity. 2 positions are modified to phosphoserine: Ser2071 and Ser2090. At Thr2092 the chain carries Phosphothreonine. Polar residues predominate over residues 2097–2124 (RNHSGSRTPPVALNSSRMSCFSRPSMSP). Residues Ser2100 and Ser2102 each carry the phosphoserine modification. Thr2104 carries the post-translational modification Phosphothreonine. Phosphoserine occurs at positions 2118, 2121, 2123, and 2132. Thr2144 carries the post-translational modification Phosphothreonine. Arg2194, Arg2207, Arg2231, and Arg2246 each carry omega-N-methylarginine. Position 2272 is a phosphoserine (Ser2272). 2 positions are modified to omega-N-methylarginine: Arg2274 and Arg2288. Phosphothreonine occurs at positions 2289, 2291, and 2302. Phosphoserine is present on Ser2310. A disordered region spans residues 2311 to 2342 (LTGSGTPPTAANYPSSSRTPQAPASANLVGPR). Phosphothreonine occurs at positions 2316 and 2329. The span at 2317 to 2334 (PPTAANYPSSSRTPQAPA) shows a compositional bias: polar residues. Position 2335 is a phosphoserine (Ser2335). Arg2342 carries the post-translational modification Omega-N-methylarginine. Ser2343, Ser2368, and Ser2376 each carry phosphoserine. A Phosphothreonine modification is found at Thr2381. At Ser2382 the chain carries Phosphoserine. Asymmetric dimethylarginine; alternate is present on Arg2384. Omega-N-methylarginine; alternate is present on Arg2384. The segment at 2389–2752 (AYERVSGRTS…PMRHRSSRSP (364 aa)) is disordered. 3 positions are modified to phosphoserine: Ser2394, Ser2398, and Ser2407. The residue at position 2409 (Thr2409) is a Phosphothreonine. Residues Ser2412, Ser2415, Ser2426, Ser2429, Ser2449, and Ser2453 each carry the phosphoserine modification. A compositionally biased stretch (polar residues) spans 2426–2439 (SPSSRMGQAPSQSL). Over residues 2455-2473 (FSDQSRCLIAQTTPVAGSQ) the composition is skewed to polar residues. Low complexity-rich tracts occupy residues 2474–2487 (SLSS…TSSA), 2515–2526 (AQQPSALAALQP), and 2533–2567 (SSSS…EGSS). A Phosphoserine modification is found at Ser2581. Thr2583 is modified (phosphothreonine). Lys2587 is covalently cross-linked (Glycyl lysine isopeptide (Lys-Gly) (interchain with G-Cter in SUMO2)). Residue Thr2599 is modified to Phosphothreonine. Low complexity predominate over residues 2608–2648 (SSSSSSSSSSSSSSSSSSSSSSSSSSSSSSSSSSSSSSSSS). Positions 2651–2668 (PAKPGPQALPKPASPKKP) are enriched in pro residues. Phosphoserine is present on residues Ser2664, Ser2675, Ser2677, Ser2684, Ser2688, Ser2690, Ser2692, Ser2694, Ser2702, and Ser2706. Over residues 2669–2689 (PPGERRSRSPRKPIDSLRDSR) the composition is skewed to basic and acidic residues. Over residues 2707 to 2716 (PRDQQSSSSE) the composition is skewed to low complexity. A compositionally biased stretch (basic and acidic residues) spans 2717–2729 (RGSRRGQRGDSRS). Thr2738 is modified (phosphothreonine). At Ser2740 the chain carries Phosphoserine. Positions 2743-2752 (PMRHRSSRSP) are enriched in basic residues.

Belongs to the CWC21 family. Component of pre-catalytic, catalytic and post-catalytic spliceosome complexes. Found in a pre-mRNA splicing complex with SFRS4, SFRS5, SNRP70, SNRPA1, SRRM1 and SRRM2. Component of the minor spliceosome, which splices U12-type introns. Interacts with DHX8. Interacts with CACTIN. In terms of tissue distribution, expressed in liver, placenta, and white blood cells.

The protein localises to the nucleus. It is found in the nucleus speckle. Its function is as follows. Required for pre-mRNA splicing as component of the spliceosome. As a component of the minor spliceosome, involved in the splicing of U12-type introns in pre-mRNAs. This is Serine/arginine repetitive matrix protein 2 (SRRM2) from Homo sapiens (Human).